The following is a 354-amino-acid chain: Chorismate synthase (354 aa).

Position 48 (arginine 48) interacts with NADP(+). Residues arginine 125–serine 127, alanine 280, lysine 295–serine 299, and arginine 321 each bind FMN.

It belongs to the chorismate synthase family. As to quaternary structure, homotetramer. FMNH2 is required as a cofactor.

It catalyses the reaction 5-O-(1-carboxyvinyl)-3-phosphoshikimate = chorismate + phosphate. It functions in the pathway metabolic intermediate biosynthesis; chorismate biosynthesis; chorismate from D-erythrose 4-phosphate and phosphoenolpyruvate: step 7/7. Catalyzes the anti-1,4-elimination of the C-3 phosphate and the C-6 proR hydrogen from 5-enolpyruvylshikimate-3-phosphate (EPSP) to yield chorismate, which is the branch point compound that serves as the starting substrate for the three terminal pathways of aromatic amino acid biosynthesis. This reaction introduces a second double bond into the aromatic ring system. The chain is Chorismate synthase from Syntrophus aciditrophicus (strain SB).